Here is a 488-residue protein sequence, read N- to C-terminus: Tocopherol cyclase, chloroplastic (488 aa).

The transit peptide at 1 to 76 (MEIRSLIVSM…VPTSPNRELR (76 aa)) directs the protein to the chloroplast.

The protein localises to the plastid. It localises to the chloroplast. The protein resides in the plastoglobule. It carries out the reaction delta-tocopherol = 2-methyl-6-phytyl-1,4-benzene-1,4-diol. It catalyses the reaction gamma-tocopherol = 2,3-dimethyl-6-phytylbenzene-1,4-diol. The catalysed reaction is delta-tocotrienol = 6-geranylgeranyl-2-methylbenzene-1,4-diol. The enzyme catalyses gamma-tocotrienol = 6-geranylgeranyl-2,3-dimethylbenzene-1,4-diol. It participates in cofactor biosynthesis; tocopherol biosynthesis. Its function is as follows. Involved in the synthesis of both tocopherols and tocotrienols (vitamin E), which presumably protect photosynthetic complexes from oxidative stress. Catalyzes the conversion of 2-methyl-6-phytyl-1,4-hydroquinone and 2,3-dimethyl-5-phytyl-1,4-hydroquinone (DMPQ) to delta- and gamma-tocopherol respectively. Also converts 2,3-dimethyl-5-geranylgeranyl-1,4-hydroquinone (DMGQ) to gamma-tocotrienol. This is Tocopherol cyclase, chloroplastic (VTE1) from Arabidopsis thaliana (Mouse-ear cress).